Reading from the N-terminus, the 246-residue chain is 2,5-diamino-6-ribosylamino-4(3H)-pyrimidinone 5'-phosphate reductase (246 aa).

Residues Thr-78, Asp-82, Leu-163, and 186 to 190 (GAEVL) each bind NADP(+).

This sequence belongs to the HTP reductase family. As to quaternary structure, homodimer.

The catalysed reaction is 2,5-diamino-6-(1-D-ribitylamino)pyrimidin-4(3H)-one 5'-phosphate + NADP(+) = 2,5-diamino-6-(1-D-ribosylamino)pyrimidin-4(3H)-one 5'-phosphate + NADPH + H(+). It carries out the reaction 2,5-diamino-6-(1-D-ribitylamino)pyrimidin-4(3H)-one 5'-phosphate + NAD(+) = 2,5-diamino-6-(1-D-ribosylamino)pyrimidin-4(3H)-one 5'-phosphate + NADH + H(+). Its pathway is cofactor biosynthesis; riboflavin biosynthesis. Functionally, catalyzes an early step in riboflavin biosynthesis, the NADPH-dependent reduction of the ribose side chain of 2,5-diamino-6-ribosylamino-4(3H)-pyrimidinone 5'-phosphate, yielding 2,5-diamino-6-ribitylamino-4(3H)-pyrimidinone 5'-phosphate. This is 2,5-diamino-6-ribosylamino-4(3H)-pyrimidinone 5'-phosphate reductase (RIB7) from Eremothecium gossypii (strain ATCC 10895 / CBS 109.51 / FGSC 9923 / NRRL Y-1056) (Yeast).